A 102-amino-acid chain; its full sequence is Monothiol glutaredoxin-S9 (102 aa).

The Glutaredoxin domain occupies 1 to 101 (MDKVVRMSSE…PLVKPFQANL (101 aa)). Residue Cys21 coordinates [2Fe-2S] cluster.

Belongs to the glutaredoxin family. CC-type subfamily.

Its subcellular location is the cytoplasm. May only reduce GSH-thiol disulfides, but not protein disulfides. In Arabidopsis thaliana (Mouse-ear cress), this protein is Monothiol glutaredoxin-S9 (GRXS9).